The sequence spans 123 residues: Large ribosomal subunit protein uL14 (123 aa).

This sequence belongs to the universal ribosomal protein uL14 family. Part of the 50S ribosomal subunit. Forms a cluster with proteins L3 and L19. In the 70S ribosome, L14 and L19 interact and together make contacts with the 16S rRNA in bridges B5 and B8.

Binds to 23S rRNA. Forms part of two intersubunit bridges in the 70S ribosome. This Wigglesworthia glossinidia brevipalpis protein is Large ribosomal subunit protein uL14.